A 139-amino-acid chain; its full sequence is uncharacterized protein (139 aa).

The protein to E.coli YecT.

This is an uncharacterized protein from Rhizobium meliloti (strain 1021) (Ensifer meliloti).